The following is a 2241-amino-acid chain: GON-4-like protein (2241 aa).

2 disordered regions span residues 1–46 and 122–259; these read MLPC…SSVS and KLHA…GRGQ. Residues 30-40 show a composition bias toward basic and acidic residues; it reads SAVKPESDQVK. Over residues 122 to 135 the composition is skewed to basic residues; sequence KLHATGSKRGKKMT. Positions 143–152 are enriched in basic and acidic residues; the sequence is QEDRCDHLTL. Positions 183 to 201 are enriched in polar residues; the sequence is PSGSQSAKPVSQPRKSTQP. Residue Ser206 is modified to Phosphoserine. Over residues 243-255 the composition is skewed to basic residues; sequence RRKKKKGTKRKRD. Ser346 carries the post-translational modification Phosphoserine. The segment covering 366-394 has biased composition (acidic residues); the sequence is EDDSSDEEYQPDDEEEDETAEESLLESDV. Positions 366-460 are disordered; sequence EDDSSDEEYQ…PPKPKQTRDS (95 aa). A required for interaction with YY1, SIN3A and HDAC1, and transcriptional repression activity region spans residues 600 to 1339; the sequence is EMGFSNMEDD…EEAREEISGS (740 aa). At Ser775 the chain carries Phosphoserine. Disordered regions lie at residues 1008-1031 and 1111-1131; these read PSPSLQPSFNPGKTPARSTHSEAP and RKPYVRRRPSKRRGVKASPCM. Residues 1111–1125 are compositionally biased toward basic residues; that stretch reads RKPYVRRRPSKRRGV. At Ser1268 the chain carries Phosphoserine. Disordered stretches follow at residues 1301-1320 and 1356-1601; these read ALEPLPQGIQESLNNPTPGD and LDTG…RARA. Positions 1386–1416 are enriched in polar residues; the sequence is PTKTPSSSQEPPDEGTSGTDVNKGSSKNALS. Ser1426 carries the phosphoserine modification. Positions 1434 to 1443 are enriched in polar residues; the sequence is SSSVDGQSVG. Composition is skewed to acidic residues over residues 1458 to 1476 and 1510 to 1534; these read EEEEEEDFDDLTQDEEDEM and GESEEENSQEENSEPEEEEEEEAEG. Positions 1586–1600 are enriched in basic residues; that stretch reads RNNHRARNKRGSRAR. PAH domains lie at 1624–1696 and 1706–1777; these read EQKD…LLPE and EQQA…FDHL. Residues 1809 to 1960 are disordered; the sequence is PDVEEEEEPP…AVGSTLPSPR (152 aa). Basic and acidic residues-rich tracts occupy residues 1836 to 1848 and 1879 to 1901; these read NHDKETEWPDGAK and CDSKSYKSKEPHELVGSSPHREA. Phosphoserine is present on residues Ser1896, Ser1902, and Ser1977. Disordered regions lie at residues 2002–2025, 2039–2149, and 2208–2241; these read EVRSCPKASPRLQKEREGQKAVSE, EKLP…VSST, and CEASSEDEDDATSTSNADQLSDHGDLLSEEELDE. Phosphoserine is present on Ser2107. Polar residues predominate over residues 2140-2149; it reads CANNSKVSST. Residues 2148–2201 form the Myb-like domain; it reads STGEKVVLWTREADRVILTMCQEQGAQPQTFNIISQQLGNKTPAEVSHRFRELM.

Found in a complex with YY1, SIN3A and HDAC1.

The protein localises to the nucleus. Functionally, has transcriptional repressor activity, probably as part of a complex with YY1, SIN3A and HDAC1. Required for B cell lymphopoiesis. The chain is GON-4-like protein (GON4L) from Homo sapiens (Human).